The sequence spans 427 residues: Enolase (427 aa).

Gln163 is a binding site for (2R)-2-phosphoglycerate. The active-site Proton donor is the Glu205. Residues Asp242, Glu285, and Asp312 each contribute to the Mg(2+) site. Positions 337, 366, 367, and 388 each coordinate (2R)-2-phosphoglycerate. The Proton acceptor role is filled by Lys337.

Belongs to the enolase family. Mg(2+) is required as a cofactor.

The protein localises to the cytoplasm. It localises to the secreted. It is found in the cell surface. It carries out the reaction (2R)-2-phosphoglycerate = phosphoenolpyruvate + H2O. Its pathway is carbohydrate degradation; glycolysis; pyruvate from D-glyceraldehyde 3-phosphate: step 4/5. Catalyzes the reversible conversion of 2-phosphoglycerate (2-PG) into phosphoenolpyruvate (PEP). It is essential for the degradation of carbohydrates via glycolysis. The chain is Enolase from Rhodopseudomonas palustris (strain BisB5).